We begin with the raw amino-acid sequence, 379 residues long: Tetraacyldisaccharide 4'-kinase (379 aa).

63–70 is an ATP binding site; the sequence is AVGGAGKT.

The protein belongs to the LpxK family.

The enzyme catalyses a lipid A disaccharide + ATP = a lipid IVA + ADP + H(+). It functions in the pathway glycolipid biosynthesis; lipid IV(A) biosynthesis; lipid IV(A) from (3R)-3-hydroxytetradecanoyl-[acyl-carrier-protein] and UDP-N-acetyl-alpha-D-glucosamine: step 6/6. Transfers the gamma-phosphate of ATP to the 4'-position of a tetraacyldisaccharide 1-phosphate intermediate (termed DS-1-P) to form tetraacyldisaccharide 1,4'-bis-phosphate (lipid IVA). The polypeptide is Tetraacyldisaccharide 4'-kinase (Anaeromyxobacter dehalogenans (strain 2CP-1 / ATCC BAA-258)).